A 185-amino-acid chain; its full sequence is Ribosome-recycling factor (185 aa).

The protein belongs to the RRF family.

It is found in the cytoplasm. Functionally, responsible for the release of ribosomes from messenger RNA at the termination of protein biosynthesis. May increase the efficiency of translation by recycling ribosomes from one round of translation to another. This chain is Ribosome-recycling factor, found in Chromohalobacter salexigens (strain ATCC BAA-138 / DSM 3043 / CIP 106854 / NCIMB 13768 / 1H11).